Reading from the N-terminus, the 486-residue chain is Vesicular GABA transporter (486 aa).

Over 1 to 93 (MASNRFQNLQ…EASEPISALQ (93 aa)) the chain is Cytoplasmic. Residues 29-46 (LNEVPSYQNQPQTGESGS) are compositionally biased toward polar residues. A disordered region spans residues 29-85 (LNEVPSYQNQPQTGESGSNPPPHDRLEPIQESVVSEQPQKDDINKQEEAKDDGHGEA). Residues 66-85 (PQKDDINKQEEAKDDGHGEA) show a composition bias toward basic and acidic residues. The helical transmembrane segment at 94–114 (AAWNVTNAIQGMFIVGLPIAV) threads the bilayer. At 115 to 119 (KVGGW) the chain is on the lumenal, vesicle side. The helical transmembrane segment at 120–140 (WSIGAMVGVAYVCYWTGVLLI) threads the bilayer. Topologically, residues 141–167 (ECLYENGVKKRKTYREIADFYKPGFGK) are cytoplasmic. Residues 168–188 (WVLAAQLTELLSTCIIYLVLA) traverse the membrane as a helical segment. At 189–203 (ADLLQSCFPSVDKAG) the chain is on the lumenal, vesicle side. A helical membrane pass occupies residues 204–224 (WMMITSASLLTCSFLDDLQIV). Over 225–228 (SRLS) the chain is Cytoplasmic. The helical transmembrane segment at 229–249 (FFNAISHLIVNLIMVLYCLSF) threads the bilayer. At 250-263 (VSQWSFSTITFSLN) the chain is on the lumenal, vesicle side. Residues 264–284 (INTLPTIVGMVVFGYTSHIFL) form a helical membrane-spanning segment. The Cytoplasmic segment spans residues 285-305 (PNLEGNMKNPAQFNVMLKWSH). Residues 306-326 (IAAAVFKVVFGMLGFLTFGEL) traverse the membrane as a helical segment. The Lumenal, vesicle segment spans residues 327–341 (TQEEISNSLPNQSFK). Asn337 carries an N-linked (GlcNAc...) asparagine glycan. Residues 342-362 (ILVNLILVVKALLSYPLPFYA) form a helical membrane-spanning segment. Residues 363 to 398 (AVQLLKNNLFLGYPQTPFTSCYSPDKSLREWAVTLR) are Cytoplasmic-facing. The helical transmembrane segment at 399 to 419 (IILVLFTLFVALSVPYLVELM) threads the bilayer. Residues 420 to 421 (GL) are Lumenal, vesicle-facing. Residues 422-442 (VGNITGTMLSFIWPALFHLYI) form a helical membrane-spanning segment. Residues 443-457 (KEKTLNNFEKRFDQG) lie on the Cytoplasmic side of the membrane. A helical transmembrane segment spans residues 458 to 478 (IIIMGCSVCISGVYFSSMELL). Residues 479-486 (RAINSADS) are Lumenal, vesicle-facing.

The protein belongs to the amino acid/polyamine transporter 2 family.

It is found in the cytoplasmic vesicle membrane. Functionally, involved in the uptake of GABA into the synaptic vesicles. This is Vesicular GABA transporter (unc-47) from Caenorhabditis elegans.